The chain runs to 354 residues: Selenide, water dikinase (354 aa).

C23 is a catalytic residue. ATP-binding positions include K26 and 54–56; that span reads TSD. D57 contacts Mg(2+). ATP contacts are provided by residues D74, D97, and 145 to 147; that span reads GHS. Residue D97 participates in Mg(2+) binding. D233 is a binding site for Mg(2+).

This sequence belongs to the selenophosphate synthase 1 family. Class I subfamily. As to quaternary structure, homodimer. The cofactor is Mg(2+).

It catalyses the reaction hydrogenselenide + ATP + H2O = selenophosphate + AMP + phosphate + 2 H(+). Synthesizes selenophosphate from selenide and ATP. This Burkholderia ambifaria (strain MC40-6) protein is Selenide, water dikinase.